The sequence spans 468 residues: ATP synthase subunit beta 1 (468 aa).

ATP is bound at residue 155–162 (GGAGVGKT).

It belongs to the ATPase alpha/beta chains family. As to quaternary structure, F-type ATPases have 2 components, CF(1) - the catalytic core - and CF(0) - the membrane proton channel. CF(1) has five subunits: alpha(3), beta(3), gamma(1), delta(1), epsilon(1). CF(0) has three main subunits: a(1), b(2) and c(9-12). The alpha and beta chains form an alternating ring which encloses part of the gamma chain. CF(1) is attached to CF(0) by a central stalk formed by the gamma and epsilon chains, while a peripheral stalk is formed by the delta and b chains.

It is found in the cell inner membrane. It catalyses the reaction ATP + H2O + 4 H(+)(in) = ADP + phosphate + 5 H(+)(out). In terms of biological role, produces ATP from ADP in the presence of a proton gradient across the membrane. The catalytic sites are hosted primarily by the beta subunits. In Syntrophotalea carbinolica (strain DSM 2380 / NBRC 103641 / GraBd1) (Pelobacter carbinolicus), this protein is ATP synthase subunit beta 1.